The primary structure comprises 426 residues: Hemojuvelin (426 aa).

The N-terminal stretch at 1-35 (MGEPGQSPSPRSSHGSPPTLSTLTLLLLLCGHAHS) is a signal peptide. Residue Tyr-46 is modified to Phosphotyrosine. Residue Asn-118 is glycosylated (N-linked (GlcNAc...) asparagine). The tract at residues 119–142 (CSRQGPTAPPPPRGPALPGAGSGL) is disordered. Disulfide bonds link Cys-148–Cys-230 and Cys-167–Cys-317. Residues Asn-213 and Asn-372 are each glycosylated (N-linked (GlcNAc...) asparagine). The GPI-anchor amidated aspartate moiety is linked to residue Asp-400. Positions 401-426 (AGVPLSSATLLAPLLSGLFVLWLCIQ) are cleaved as a propeptide — removed in mature form.

It belongs to the repulsive guidance molecule (RGM) family. Interacts with BMP2 and BMP4. Interacts with BMP6. Interacts with BMPR1B. Interacts with TMPRSS6. In terms of processing, autocatalytically cleaved at low pH; the two chains remain linked via two disulfide bonds. Also proteolytically processed by TMPRSS6, several fragments being released in the extracellular space; regulates HJV activity in BMP signaling and thefore iron homeostasis. In terms of tissue distribution, adult and fetal liver, heart, and skeletal muscle.

The protein localises to the cell membrane. Its function is as follows. Acts as a bone morphogenetic protein (BMP) coreceptor. Through enhancement of BMP signaling regulates hepcidin (HAMP) expression and regulates iron homeostasis. This Homo sapiens (Human) protein is Hemojuvelin.